Reading from the N-terminus, the 239-residue chain is 4-hydroxy-tetrahydrodipicolinate reductase (239 aa).

NAD(+) contacts are provided by residues 8–13 (GSTGKM), 78–80 (GTT), and 102–105 (SANM). H134 functions as the Proton donor/acceptor in the catalytic mechanism. H135 is a (S)-2,3,4,5-tetrahydrodipicolinate binding site. K138 acts as the Proton donor in catalysis. 144–145 (GT) contacts (S)-2,3,4,5-tetrahydrodipicolinate.

The protein belongs to the DapB family.

Its subcellular location is the cytoplasm. It carries out the reaction (S)-2,3,4,5-tetrahydrodipicolinate + NAD(+) + H2O = (2S,4S)-4-hydroxy-2,3,4,5-tetrahydrodipicolinate + NADH + H(+). It catalyses the reaction (S)-2,3,4,5-tetrahydrodipicolinate + NADP(+) + H2O = (2S,4S)-4-hydroxy-2,3,4,5-tetrahydrodipicolinate + NADPH + H(+). It participates in amino-acid biosynthesis; L-lysine biosynthesis via DAP pathway; (S)-tetrahydrodipicolinate from L-aspartate: step 4/4. Its function is as follows. Catalyzes the conversion of 4-hydroxy-tetrahydrodipicolinate (HTPA) to tetrahydrodipicolinate. The chain is 4-hydroxy-tetrahydrodipicolinate reductase from Rickettsia conorii (strain ATCC VR-613 / Malish 7).